We begin with the raw amino-acid sequence, 293 residues long: Large ribosomal RNA subunit accumulation protein YCED homolog 1, chloroplastic (293 aa).

A chloroplast-targeting transit peptide spans M1–S42.

Belongs to the DUF177 domain family. As to expression, highly expressed in shoots and leaves. Detected in roots, embryos and endosperm.

It is found in the plastid. The protein localises to the chloroplast. Functionally, plays a role in synthesis, processing and/or stability of 23S rRNA. Required for embryogenesis. May be involved in RPL23 transcript levels regulation in non-photosynthetic plastids. The polypeptide is Large ribosomal RNA subunit accumulation protein YCED homolog 1, chloroplastic (Zea mays (Maize)).